We begin with the raw amino-acid sequence, 311 residues long: MIIFAIESSHDDTSFALLDDNKPIWMKTITQTEIHKQYGGTVPEIASRLHVKNIGILIEDIKSQININKIDLIAYTKEPGLVGSLHVGYVVAQSLALILNKKIVGLNHLEGHFYSAFIGKEVIYPALGLLVSGGHSQLVLYNSKDDFKIIGQTQDDAVGEVYDKVARKLNLGFPGGPLIDQIWKNNHKLYTAHLTIPKTEGFFDFSFSGIKTNVINLINNCASRNEQINVNQIATEFQNTIVEYLKEHMETAIKKFSPKCIVLAGGVSANFAIREMFYSLHKNVFLPDLEYTTDNAMMIARLAYEKFRYNN.

Residues His-108 and His-112 each contribute to the Fe cation site. Residues 130–134 (LVSGG), Asp-163, Gly-176, Asp-180, and Asn-270 contribute to the substrate site. Asp-294 provides a ligand contact to Fe cation.

Belongs to the KAE1 / TsaD family. Fe(2+) serves as cofactor.

It is found in the cytoplasm. The catalysed reaction is L-threonylcarbamoyladenylate + adenosine(37) in tRNA = N(6)-L-threonylcarbamoyladenosine(37) in tRNA + AMP + H(+). Functionally, required for the formation of a threonylcarbamoyl group on adenosine at position 37 (t(6)A37) in tRNAs that read codons beginning with adenine. Is involved in the transfer of the threonylcarbamoyl moiety of threonylcarbamoyl-AMP (TC-AMP) to the N6 group of A37, together with TsaE and TsaB. TsaD likely plays a direct catalytic role in this reaction. The protein is tRNA N6-adenosine threonylcarbamoyltransferase of Metamycoplasma arthritidis (strain 158L3-1) (Mycoplasma arthritidis).